The following is a 261-amino-acid chain: Cytochrome c oxidase subunit 3 (261 aa).

The Mitochondrial matrix segment spans residues 1 to 15; the sequence is MTHQTHAYHMVNPSP. The helical transmembrane segment at 16-34 threads the bilayer; that stretch reads WPLTGALSALLMTFGLIMW. Over 35 to 40 the chain is Mitochondrial intermembrane; sequence FHFNST. Residues 41 to 66 traverse the membrane as a helical segment; it reads ALLMLGLTTNMLTMYQWWRDIIREST. Over 67–72 the chain is Mitochondrial matrix; the sequence is FQGHHT. The chain crosses the membrane as a helical span at residues 73–105; it reads PVVQKGLRYGMILFIISEVLFFTGFFWAFYHSS. The Mitochondrial intermembrane portion of the chain corresponds to 106–128; that stretch reads LAPTPELGGCWPPTGIHPLNPLE. Residues 129 to 152 traverse the membrane as a helical segment; sequence VPLLNTSVLLASGVSITWAHHSLM. Topologically, residues 153–155 are mitochondrial matrix; it reads EGH. A helical membrane pass occupies residues 156 to 183; that stretch reads RNHMLQALFITIALGVYFTLLQASEYYE. Topologically, residues 184–190 are mitochondrial intermembrane; the sequence is APFTISD. A helical transmembrane segment spans residues 191–223; it reads GVYGSTFFVATGFHGLHVIIGSTFLIVCFFRQL. Residues 224–232 are Mitochondrial matrix-facing; sequence KFHFTSSHH. The chain crosses the membrane as a helical span at residues 233–256; sequence FGFEAAAWYWHFVDVVWLFLYVSI. Residues 257–261 lie on the Mitochondrial intermembrane side of the membrane; it reads YWWGS.

It belongs to the cytochrome c oxidase subunit 3 family. As to quaternary structure, component of the cytochrome c oxidase (complex IV, CIV), a multisubunit enzyme composed of 14 subunits. The complex is composed of a catalytic core of 3 subunits MT-CO1, MT-CO2 and MT-CO3, encoded in the mitochondrial DNA, and 11 supernumerary subunits COX4I, COX5A, COX5B, COX6A, COX6B, COX6C, COX7A, COX7B, COX7C, COX8 and NDUFA4, which are encoded in the nuclear genome. The complex exists as a monomer or a dimer and forms supercomplexes (SCs) in the inner mitochondrial membrane with NADH-ubiquinone oxidoreductase (complex I, CI) and ubiquinol-cytochrome c oxidoreductase (cytochrome b-c1 complex, complex III, CIII), resulting in different assemblies (supercomplex SCI(1)III(2)IV(1) and megacomplex MCI(2)III(2)IV(2)).

The protein resides in the mitochondrion inner membrane. It catalyses the reaction 4 Fe(II)-[cytochrome c] + O2 + 8 H(+)(in) = 4 Fe(III)-[cytochrome c] + 2 H2O + 4 H(+)(out). Component of the cytochrome c oxidase, the last enzyme in the mitochondrial electron transport chain which drives oxidative phosphorylation. The respiratory chain contains 3 multisubunit complexes succinate dehydrogenase (complex II, CII), ubiquinol-cytochrome c oxidoreductase (cytochrome b-c1 complex, complex III, CIII) and cytochrome c oxidase (complex IV, CIV), that cooperate to transfer electrons derived from NADH and succinate to molecular oxygen, creating an electrochemical gradient over the inner membrane that drives transmembrane transport and the ATP synthase. Cytochrome c oxidase is the component of the respiratory chain that catalyzes the reduction of oxygen to water. Electrons originating from reduced cytochrome c in the intermembrane space (IMS) are transferred via the dinuclear copper A center (CU(A)) of subunit 2 and heme A of subunit 1 to the active site in subunit 1, a binuclear center (BNC) formed by heme A3 and copper B (CU(B)). The BNC reduces molecular oxygen to 2 water molecules using 4 electrons from cytochrome c in the IMS and 4 protons from the mitochondrial matrix. The sequence is that of Cytochrome c oxidase subunit 3 (MT-CO3) from Tragelaphus oryx (Eland).